Reading from the N-terminus, the 384-residue chain is Methylthioribose-1-phosphate isomerase (384 aa).

Asp255 (proton donor) is an active-site residue.

This sequence belongs to the eIF-2B alpha/beta/delta subunits family. MtnA subfamily.

The protein resides in the cytoplasm. Its subcellular location is the nucleus. It carries out the reaction 5-(methylsulfanyl)-alpha-D-ribose 1-phosphate = 5-(methylsulfanyl)-D-ribulose 1-phosphate. It functions in the pathway amino-acid biosynthesis; L-methionine biosynthesis via salvage pathway; L-methionine from S-methyl-5-thio-alpha-D-ribose 1-phosphate: step 1/6. Its function is as follows. Catalyzes the interconversion of methylthioribose-1-phosphate (MTR-1-P) into methylthioribulose-1-phosphate (MTRu-1-P). The sequence is that of Methylthioribose-1-phosphate isomerase (mri1) from Talaromyces marneffei (strain ATCC 18224 / CBS 334.59 / QM 7333) (Penicillium marneffei).